Consider the following 350-residue polypeptide: Uroporphyrinogen decarboxylase (350 aa).

Substrate is bound by residues 28 to 32, D78, Y155, S210, and H325; that span reads RQAGR.

It belongs to the uroporphyrinogen decarboxylase family. In terms of assembly, homodimer.

The protein localises to the cytoplasm. It carries out the reaction uroporphyrinogen III + 4 H(+) = coproporphyrinogen III + 4 CO2. It functions in the pathway porphyrin-containing compound metabolism; protoporphyrin-IX biosynthesis; coproporphyrinogen-III from 5-aminolevulinate: step 4/4. Catalyzes the decarboxylation of four acetate groups of uroporphyrinogen-III to yield coproporphyrinogen-III. The protein is Uroporphyrinogen decarboxylase of Microcystis aeruginosa (strain NIES-843 / IAM M-2473).